The chain runs to 463 residues: MSGIGPDQALSIAAIATAVAPGQGGIAVIRLSGPSAVRAVAAITVIPGQQVWESHRVLYGHVVAAGGVERLDEVLVLVMLAPRSFTGEDVVEIHCHGGVIAVQQVLARVLEQPGVRRALPGEFSQRAVLNGRLDLTRAEAIGDLVGARSQRAAQLAMAGLDGGIQKKMVVLRERLLDQLSELEARVDFEEDLPPLNGEALLQELQAVRLELLTLVADGERGSVVRHGLRVALVGRPNVGKSSLLNLLSRRERAIVTDLPGTTRDLLESEIVLDGVPITLLDTAGIRATSNAVEKLGIARSRDALASADLVLLLFDLAQGWSDDDQALFALIPEGVPCLRVGNKADLPLKAEPVAETVAASVADVRLSAVTGDGEQALVQAVLERCGALGEQPLLLALNQRQSDLAVTAAEALARSEQVAADGLPWDFWTIDLRQAIRSLGEITGEQLTESVLDRIFSRFCIGK.

(6S)-5-formyl-5,6,7,8-tetrahydrofolate-binding residues include R30, E92, and R132. Residues 227–386 enclose the TrmE-type G domain; sequence GLRVALVGRP…LVQAVLERCG (160 aa). A K(+)-binding site is contributed by N237. GTP-binding positions include 237–242, 256–262, 281–284, and 342–345; these read NVGKSS, TDLPGTT, DTAG, and NKAD. S241 is a binding site for Mg(2+). K(+) contacts are provided by T256, L258, and T261. T262 contacts Mg(2+). Residue K463 participates in (6S)-5-formyl-5,6,7,8-tetrahydrofolate binding.

Belongs to the TRAFAC class TrmE-Era-EngA-EngB-Septin-like GTPase superfamily. TrmE GTPase family. Homodimer. Heterotetramer of two MnmE and two MnmG subunits. K(+) serves as cofactor.

It localises to the cytoplasm. Its function is as follows. Exhibits a very high intrinsic GTPase hydrolysis rate. Involved in the addition of a carboxymethylaminomethyl (cmnm) group at the wobble position (U34) of certain tRNAs, forming tRNA-cmnm(5)s(2)U34. The protein is tRNA modification GTPase MnmE of Synechococcus sp. (strain CC9311).